A 150-amino-acid chain; its full sequence is Putative esterase VC_A0580 (150 aa).

It belongs to the thioesterase PaaI family.

This chain is Putative esterase VC_A0580, found in Vibrio cholerae serotype O1 (strain ATCC 39315 / El Tor Inaba N16961).